The following is a 102-amino-acid chain: Small ribosomal subunit protein uS10 (102 aa).

This sequence belongs to the universal ribosomal protein uS10 family. As to quaternary structure, part of the 30S ribosomal subunit.

Functionally, involved in the binding of tRNA to the ribosomes. The protein is Small ribosomal subunit protein uS10 of Fervidobacterium nodosum (strain ATCC 35602 / DSM 5306 / Rt17-B1).